We begin with the raw amino-acid sequence, 543 residues long: tRNA (guanine(37)-N(1))-methyltransferase (543 aa).

A mitochondrion-targeting transit peptide spans 1–59 (MLKSLCFVIRPAIVSRPQFRLPTIARLSLRQFQNQPQSVGFFTMAPLETRALALSPSAT). S-adenosyl-L-methionine contacts are provided by residues His-282, 320–321 (DL), and 348–349 (DG). Residues 366–405 (DPAPPPKVSNRQRDREAKEARRKREQAKAAGQPVTETAPM) form a disordered region. Asn-431 serves as a coordination point for S-adenosyl-L-methionine.

This sequence belongs to the class I-like SAM-binding methyltransferase superfamily. TRM5/TYW2 family. Monomer.

The protein resides in the mitochondrion matrix. It localises to the nucleus. It is found in the cytoplasm. The enzyme catalyses guanosine(37) in tRNA + S-adenosyl-L-methionine = N(1)-methylguanosine(37) in tRNA + S-adenosyl-L-homocysteine + H(+). Functionally, specifically methylates the N1 position of guanosine-37 in various cytoplasmic and mitochondrial tRNAs. Methylation is not dependent on the nature of the nucleoside 5' of the target nucleoside. This is the first step in the biosynthesis of wybutosine (yW), a modified base adjacent to the anticodon of tRNAs and required for accurate decoding. This Cryptococcus neoformans var. neoformans serotype D (strain JEC21 / ATCC MYA-565) (Filobasidiella neoformans) protein is tRNA (guanine(37)-N(1))-methyltransferase.